A 168-amino-acid chain; its full sequence is Photosystem I assembly protein Ycf3 (168 aa).

TPR repeat units follow at residues 35–68, 72–105, and 120–153; these read AFTYYRDGMSAQSEGEYAEALQNYYEAMRLEIDP, SYILYNIGLIHTSNGEHAKALEYYFQALERNPSL, and GEQAIQQGDSETSEAWFNQAADYWKQAIALAPSN.

This sequence belongs to the Ycf3 family.

The protein localises to the plastid. It is found in the chloroplast thylakoid membrane. Its function is as follows. Essential for the assembly of the photosystem I (PSI) complex. May act as a chaperone-like factor to guide the assembly of the PSI subunits. This Physcomitrium patens (Spreading-leaved earth moss) protein is Photosystem I assembly protein Ycf3.